A 477-amino-acid polypeptide reads, in one-letter code: Glycogen synthase (477 aa).

Lysine 15 provides a ligand contact to ADP-alpha-D-glucose.

Belongs to the glycosyltransferase 1 family. Bacterial/plant glycogen synthase subfamily.

It carries out the reaction [(1-&gt;4)-alpha-D-glucosyl](n) + ADP-alpha-D-glucose = [(1-&gt;4)-alpha-D-glucosyl](n+1) + ADP + H(+). The protein operates within glycan biosynthesis; glycogen biosynthesis. Its function is as follows. Synthesizes alpha-1,4-glucan chains using ADP-glucose. In Shigella dysenteriae serotype 1 (strain Sd197), this protein is Glycogen synthase.